A 483-amino-acid polypeptide reads, in one-letter code: Zinc metalloproteinase/disintegrin (483 aa).

The first 20 residues, 1 to 20, serve as a signal peptide directing secretion; that stretch reads MIQVLLVTLCLAAFPYQGSS. Residues 21 to 190 constitute a propeptide that is removed on maturation; sequence IILESGNVND…KKASQLNLTP (170 aa). In terms of domain architecture, Peptidase M12B spans 198–394; it reads RYIELVVVAD…HNPQCMLNEP (197 aa). Residues glutamate 201 and aspartate 285 each contribute to the Ca(2+) site. 3 cysteine pairs are disulfide-bonded: cysteine 309/cysteine 389, cysteine 349/cysteine 373, and cysteine 351/cysteine 356. Histidine 334 serves as a coordination point for Zn(2+). Residue glutamate 335 is part of the active site. Residues histidine 338 and histidine 344 each contribute to the Zn(2+) site. Residues cysteine 389 and asparagine 392 each coordinate Ca(2+). The propeptide occupies 395-418; it reads LRTDIVSTPVSGNELLETGEESDF. One can recognise a Disintegrin domain in the interval 402–483; it reads TPVSGNELLE…AGCPRNPFHA (82 aa). Disulfide bonds link cysteine 425/cysteine 448, cysteine 439/cysteine 445, cysteine 444/cysteine 469, and cysteine 457/cysteine 476. A Cell attachment site motif is present at residues 461 to 463; sequence RGD.

The protein belongs to the venom metalloproteinase (M12B) family. P-II subfamily. P-IId sub-subfamily. As to quaternary structure, homodimer; disulfide-linked (disintegrin). Zn(2+) is required as a cofactor. As to expression, expressed by the venom gland.

It is found in the secreted. Its function is as follows. Impairs hemostasis in the envenomed animal. This protein has not been identified in the venom. Inhibits ADP-induced platelet aggregation. Binds and inhibits integrins GPIIb/GPIIIa (ITGA2B/ITGB3), alpha-5/beta-1 (ITGA5/ITGB1), alpha-V/beta-3 (ITGAV/ITGB3), and alpha-V/beta-5 (ITGAV/ITGB5). It blocks cancer cell adhesion (tested on human breast cancer cell line MDA-MB-435) to fibronectin and vitronectin and thus prevents invasion of cancer cells. The chain is Zinc metalloproteinase/disintegrin from Agkistrodon contortrix contortrix (Southern copperhead).